Consider the following 288-residue polypeptide: Hydroxyethylthiazole kinase (288 aa).

Met-55 serves as a coordination point for substrate. ATP is bound by residues Asn-131 and Ser-177. Gly-204 serves as a coordination point for substrate.

This sequence belongs to the Thz kinase family. The cofactor is Mg(2+).

It catalyses the reaction 5-(2-hydroxyethyl)-4-methylthiazole + ATP = 4-methyl-5-(2-phosphooxyethyl)-thiazole + ADP + H(+). It functions in the pathway cofactor biosynthesis; thiamine diphosphate biosynthesis; 4-methyl-5-(2-phosphoethyl)-thiazole from 5-(2-hydroxyethyl)-4-methylthiazole: step 1/1. Its function is as follows. Catalyzes the phosphorylation of the hydroxyl group of 4-methyl-5-beta-hydroxyethylthiazole (THZ). This Haloquadratum walsbyi (strain DSM 16790 / HBSQ001) protein is Hydroxyethylthiazole kinase.